The sequence spans 269 residues: Mitochondrial genome maintenance protein MGM101 (269 aa).

Residues 1–30 constitute a mitochondrion transit peptide; that stretch reads MKSIFKVRGCVSHAAQFCQKRTVVSTGTSN.

Belongs to the MGM101 family.

It localises to the mitochondrion matrix. The protein resides in the mitochondrion nucleoid. Performs an essential function in the repair of oxidatively damaged mtDNA that is required for the maintenance of the mitochondrial genome. Binds to DNA. The sequence is that of Mitochondrial genome maintenance protein MGM101 (MGM101) from Saccharomyces cerevisiae (strain ATCC 204508 / S288c) (Baker's yeast).